Consider the following 96-residue polypeptide: MEHKEVVLLLLLFLKSGQGEPLDDYVNTQGPSLFSVTKKQLGAGSREECAAKCEEDKEFTCRAFQYHSKEQQCVIMAENRKSSIIIRMRDAVLFEK.

The signal sequence occupies residues 1 to 19 (MEHKEVVLLLLLFLKSGQG). The PAN domain maps to 20–96 (EPLDDYVNTQ…RMRDAVLFEK (77 aa)). 2 disulfide bridges follow: cysteine 49/cysteine 73 and cysteine 53/cysteine 61.

It localises to the secreted. Functionally, may bind noncovalently to lysine binding sites present in the kringle structures of plasminogen. This may interfere with the binding of fibrin or alpha-2-antiplasmin to plasminogen and may result in the localization of activity at sites necessary for extracellular matrix destruction. The chain is Plasminogen-like protein B (PLGLB1) from Homo sapiens (Human).